The primary structure comprises 442 residues: Serine--tRNA ligase (442 aa).

Residue Thr249–Glu251 participates in L-serine binding. Arg280–Glu282 provides a ligand contact to ATP. Glu303 contributes to the L-serine binding site. Glu367–Ser370 contacts ATP. Ser402 lines the L-serine pocket.

The protein belongs to the class-II aminoacyl-tRNA synthetase family. Type-1 seryl-tRNA synthetase subfamily. In terms of assembly, homodimer. The tRNA molecule binds across the dimer.

The protein localises to the cytoplasm. The enzyme catalyses tRNA(Ser) + L-serine + ATP = L-seryl-tRNA(Ser) + AMP + diphosphate + H(+). It carries out the reaction tRNA(Sec) + L-serine + ATP = L-seryl-tRNA(Sec) + AMP + diphosphate + H(+). The protein operates within aminoacyl-tRNA biosynthesis; selenocysteinyl-tRNA(Sec) biosynthesis; L-seryl-tRNA(Sec) from L-serine and tRNA(Sec): step 1/1. Its function is as follows. Catalyzes the attachment of serine to tRNA(Ser). Is also able to aminoacylate tRNA(Sec) with serine, to form the misacylated tRNA L-seryl-tRNA(Sec), which will be further converted into selenocysteinyl-tRNA(Sec). The protein is Serine--tRNA ligase of Acidovorax ebreus (strain TPSY) (Diaphorobacter sp. (strain TPSY)).